The primary structure comprises 237 residues: Ribonuclease PH (237 aa).

Phosphate is bound by residues Arg-86 and 124-126 (GTR).

Belongs to the RNase PH family. Homohexameric ring arranged as a trimer of dimers.

It carries out the reaction tRNA(n+1) + phosphate = tRNA(n) + a ribonucleoside 5'-diphosphate. Functionally, phosphorolytic 3'-5' exoribonuclease that plays an important role in tRNA 3'-end maturation. Removes nucleotide residues following the 3'-CCA terminus of tRNAs; can also add nucleotides to the ends of RNA molecules by using nucleoside diphosphates as substrates, but this may not be physiologically important. Probably plays a role in initiation of 16S rRNA degradation (leading to ribosome degradation) during starvation. The sequence is that of Ribonuclease PH from Pseudoalteromonas translucida (strain TAC 125).